A 163-amino-acid chain; its full sequence is Lipoprotein signal peptidase (163 aa).

Transmembrane regions (helical) follow at residues 3-23 (IPLIYNRILILFFFIANIIIL), 70-90 (NYILCLISSIAILIILKTMYN), and 94-114 (IENFFYNIPSAFIISGAIGNF). Active-site residues include Asp125 and Asp143. Residues 134-154 (WHFATFNIADVSIFIGSVLFI) form a helical membrane-spanning segment.

This sequence belongs to the peptidase A8 family.

The protein resides in the cell membrane. It carries out the reaction Release of signal peptides from bacterial membrane prolipoproteins. Hydrolyzes -Xaa-Yaa-Zaa-|-(S,diacylglyceryl)Cys-, in which Xaa is hydrophobic (preferably Leu), and Yaa (Ala or Ser) and Zaa (Gly or Ala) have small, neutral side chains.. Its pathway is protein modification; lipoprotein biosynthesis (signal peptide cleavage). This protein specifically catalyzes the removal of signal peptides from prolipoproteins. In Buchnera aphidicola subsp. Baizongia pistaciae (strain Bp), this protein is Lipoprotein signal peptidase.